The chain runs to 496 residues: Probable CtpA-like serine protease (496 aa).

Residues 1-16 are compositionally biased toward basic and acidic residues; that stretch reads MDDKQHTSSSDDERAE. The disordered stretch occupies residues 1-27; the sequence is MDDKQHTSSSDDERAEIATSNQDQETN. Residues 18–27 are compositionally biased toward polar residues; it reads ATSNQDQETN. The helical transmembrane segment at 39-59 threads the bilayer; sequence FISILIGTILITAVITVVAYI. The PDZ domain maps to 124 to 206; the sequence is TKSFNEGVSG…TEVTLTVQRG (83 aa). Active-site charge relay system residues include Ser-329, Asp-340, and Lys-354.

The protein belongs to the peptidase S41A family.

Its subcellular location is the cell membrane. This is Probable CtpA-like serine protease from Staphylococcus aureus (strain MSSA476).